A 697-amino-acid polypeptide reads, in one-letter code: Elongation factor G (697 aa).

A tr-type G domain is found at 10-285 (AKTRNIGIMA…GVIDYLPSPL (276 aa)). GTP-binding positions include 19-26 (AHIDAGKT), 83-87 (DTPGH), and 137-140 (NKMD).

It belongs to the TRAFAC class translation factor GTPase superfamily. Classic translation factor GTPase family. EF-G/EF-2 subfamily.

It localises to the cytoplasm. Its function is as follows. Catalyzes the GTP-dependent ribosomal translocation step during translation elongation. During this step, the ribosome changes from the pre-translocational (PRE) to the post-translocational (POST) state as the newly formed A-site-bound peptidyl-tRNA and P-site-bound deacylated tRNA move to the P and E sites, respectively. Catalyzes the coordinated movement of the two tRNA molecules, the mRNA and conformational changes in the ribosome. In Lactobacillus helveticus (strain DPC 4571), this protein is Elongation factor G.